The sequence spans 968 residues: uncharacterized protein (968 aa).

Residues 12 to 32 (LIFIFSLFFLILFFLESSIGF) traverse the membrane as a helical segment.

It to E.coli YtfN.

It localises to the membrane. This is an uncharacterized protein from Buchnera aphidicola subsp. Schizaphis graminum (strain Sg).